Consider the following 200-residue polypeptide: Probable GTP-binding protein EngB (200 aa).

Residues 30–199 (KKAEVAIAGR…EDYIYENWIK (170 aa)) enclose the EngB-type G domain. GTP contacts are provided by residues 38-45 (GRSNAGKS), 64-68 (GKTRL), 82-85 (DMPG), 149-152 (TKAD), and 178-180 (VSA). 2 residues coordinate Mg(2+): S45 and T66.

Belongs to the TRAFAC class TrmE-Era-EngA-EngB-Septin-like GTPase superfamily. EngB GTPase family. Mg(2+) is required as a cofactor.

Functionally, necessary for normal cell division and for the maintenance of normal septation. In Bdellovibrio bacteriovorus (strain ATCC 15356 / DSM 50701 / NCIMB 9529 / HD100), this protein is Probable GTP-binding protein EngB.